The sequence spans 368 residues: Large ribosomal subunit protein mL46 (368 aa).

The disordered stretch occupies residues 53–81 (TATATTTTTLPPPHPPVTTSTGTHAATST). The segment covering 69 to 81 (VTTSTGTHAATST) has biased composition (low complexity).

The protein belongs to the mitochondrion-specific ribosomal protein mL46 family. In terms of assembly, component of the mitochondrial large ribosomal subunit (mt-LSU). Mature N.crassa 74S mitochondrial ribosomes consist of a small (37S) and a large (54S) subunit. The 37S small subunit contains a 16S ribosomal RNA (16S mt-rRNA) and 32 different proteins. The 54S large subunit contains a 23S rRNA (23S mt-rRNA) and 42 different proteins.

It is found in the mitochondrion. Component of the mitochondrial ribosome (mitoribosome), a dedicated translation machinery responsible for the synthesis of mitochondrial genome-encoded proteins, including at least some of the essential transmembrane subunits of the mitochondrial respiratory chain. The mitoribosomes are attached to the mitochondrial inner membrane and translation products are cotranslationally integrated into the membrane. In Neurospora crassa (strain ATCC 24698 / 74-OR23-1A / CBS 708.71 / DSM 1257 / FGSC 987), this protein is Large ribosomal subunit protein mL46 (mrpl17).